Here is a 72-residue protein sequence, read N- to C-terminus: Translation initiation factor IF-1 (72 aa).

Residues Met1 to Lys72 enclose the S1-like domain.

It belongs to the IF-1 family. As to quaternary structure, component of the 30S ribosomal translation pre-initiation complex which assembles on the 30S ribosome in the order IF-2 and IF-3, IF-1 and N-formylmethionyl-tRNA(fMet); mRNA recruitment can occur at any time during PIC assembly.

It is found in the cytoplasm. Its function is as follows. One of the essential components for the initiation of protein synthesis. Stabilizes the binding of IF-2 and IF-3 on the 30S subunit to which N-formylmethionyl-tRNA(fMet) subsequently binds. Helps modulate mRNA selection, yielding the 30S pre-initiation complex (PIC). Upon addition of the 50S ribosomal subunit IF-1, IF-2 and IF-3 are released leaving the mature 70S translation initiation complex. The chain is Translation initiation factor IF-1 from Spiroplasma kunkelii.